A 105-amino-acid chain; its full sequence is Small ribosomal subunit protein uS10 (105 aa).

It belongs to the universal ribosomal protein uS10 family. In terms of assembly, part of the 30S ribosomal subunit.

Involved in the binding of tRNA to the ribosomes. The polypeptide is Small ribosomal subunit protein uS10 (Trichodesmium erythraeum (strain IMS101)).